The sequence spans 354 residues: Rhodopsin (354 aa).

Topologically, residues 1 to 36 (MNGTEGPYFYIPMVNTTGIVRSPYEYPQYYLVNPAA) are extracellular. 2 N-linked (GlcNAc...) asparagine glycosylation sites follow: Asn2 and Asn15. The chain crosses the membrane as a helical span at residues 37 to 61 (YAALGAYMFFLILLGFPINFLTLYV). Residues 62–73 (TLEHKKLRTPLN) are Cytoplasmic-facing. A helical transmembrane segment spans residues 74–96 (YILLNLAVADLFMVFGGFTTTMY). Residues 97–110 (TSMHGYFVLGRLGC) lie on the Extracellular side of the membrane. Cys110 and Cys187 are joined by a disulfide. A helical transmembrane segment spans residues 111–133 (NLEGFFATLGGEIGLWSLVVLAI). A 'Ionic lock' involved in activated form stabilization motif is present at residues 134–136 (ERW). Over 134-152 (ERWVVVCKPISNFRFGENH) the chain is Cytoplasmic. Residues 153–173 (AIMGLAFTWIMACACAVPPLV) traverse the membrane as a helical segment. The Extracellular portion of the chain corresponds to 174–202 (GWSRYIPEGMQCSCGVDYYTRAEGFNNES). Asn200 carries an N-linked (GlcNAc...) asparagine glycan. A helical transmembrane segment spans residues 203 to 224 (FVVYMFTCHFCIPLTIIGFCYG). Residues 225–252 (RLLCAVKEAAAAQQESETTQRAEREVTR) are Cytoplasmic-facing. A helical transmembrane segment spans residues 253–274 (MVILMVVGFLVCWLPYASVAWY). Residues 275–286 (IFSNQGSQFGPL) lie on the Extracellular side of the membrane. Residues 287–308 (FMTIPAFFAKSSSVYNPMIYIC) traverse the membrane as a helical segment. Residue Lys296 is modified to N6-(retinylidene)lysine. Topologically, residues 309-354 (MNKQFRHCMITTLCCGKNPFEEEEGASTTASKTEASSVSSSSVSPA) are cytoplasmic. S-palmitoyl cysteine attachment occurs at residues Cys322 and Cys323. The tract at residues 333–354 (GASTTASKTEASSVSSSSVSPA) is disordered. The span at 334-354 (ASTTASKTEASSVSSSSVSPA) shows a compositional bias: low complexity.

The protein belongs to the G-protein coupled receptor 1 family. Opsin subfamily. Post-translationally, phosphorylated on some or all of the serine and threonine residues present in the C-terminal region. In terms of processing, contains one covalently linked retinal chromophore.

The protein resides in the membrane. It localises to the cell projection. The protein localises to the cilium. It is found in the photoreceptor outer segment. Functionally, photoreceptor required for image-forming vision at low light intensity. While most salt water fish species use retinal as chromophore, most freshwater fish use 3-dehydroretinal, or a mixture of retinal and 3-dehydroretinal. Light-induced isomerization of 11-cis to all-trans retinal triggers a conformational change that activates signaling via G-proteins. Subsequent receptor phosphorylation mediates displacement of the bound G-protein alpha subunit by arrestin and terminates signaling. This is Rhodopsin (rho) from Salaria pavo (Peacock blenny).